Reading from the N-terminus, the 238-residue chain is Uridylate kinase (238 aa).

Position 12-15 (12-15 (KLSG)) interacts with ATP. Residue G54 coordinates UMP. G55 and R59 together coordinate ATP. UMP is bound by residues D74 and 135–142 (TGNPFFTT). The ATP site is built by T162, N163, Y168, and D171.

Belongs to the UMP kinase family. In terms of assembly, homohexamer.

It is found in the cytoplasm. It catalyses the reaction UMP + ATP = UDP + ADP. It functions in the pathway pyrimidine metabolism; CTP biosynthesis via de novo pathway; UDP from UMP (UMPK route): step 1/1. Its activity is regulated as follows. Inhibited by UTP. In terms of biological role, catalyzes the reversible phosphorylation of UMP to UDP. The sequence is that of Uridylate kinase from Rhodopseudomonas palustris (strain BisA53).